We begin with the raw amino-acid sequence, 225 residues long: Thaumatin-like protein (225 aa).

The signal sequence occupies residues Met1–Gly24. 8 cysteine pairs are disulfide-bonded: Cys33-Cys224, Cys74-Cys84, Cys89-Cys95, Cys140-Cys213, Cys146-Cys196, Cys154-Cys164, Cys168-Cys177, and Cys178-Cys183. Asn187 carries N-linked (GlcNAc...) asparagine glycosylation.

Belongs to the thaumatin family. N-glycosylated. As to expression, woody stem plug.

The protein resides in the secreted. Has antifungal activity. This is Thaumatin-like protein (tlp) from Actinidia deliciosa (Kiwi).